The primary structure comprises 286 residues: B3 domain-containing protein REM11 (286 aa).

The TF-B3 1 DNA-binding region spans 1–70 (MAWNLAIITL…TPMLSLVSTQ (70 aa)). Residues 68–114 (STQSTSHKSQKRECSKHSEKESISAVPSKGKKNRKARSNREERRDSS) form a disordered region. Positions 78–89 (KRECSKHSEKES) are enriched in basic and acidic residues. The segment at residues 119–219 (NRFVTFTPED…RAQVCFYGVF (101 aa)) is a DNA-binding region (TF-B3 2).

It is found in the nucleus. The sequence is that of B3 domain-containing protein REM11 (REM11) from Arabidopsis thaliana (Mouse-ear cress).